A 240-amino-acid chain; its full sequence is tRNA (guanine-N(1)-)-methyltransferase (240 aa).

Residues Gly110 and 130–135 each bind S-adenosyl-L-methionine; that span reads VGDYVL.

Belongs to the RNA methyltransferase TrmD family. As to quaternary structure, homodimer.

The protein resides in the cytoplasm. The enzyme catalyses guanosine(37) in tRNA + S-adenosyl-L-methionine = N(1)-methylguanosine(37) in tRNA + S-adenosyl-L-homocysteine + H(+). In terms of biological role, specifically methylates guanosine-37 in various tRNAs. This chain is tRNA (guanine-N(1)-)-methyltransferase, found in Borrelia recurrentis (strain A1).